We begin with the raw amino-acid sequence, 371 residues long: T-cell acute lymphocytic leukemia protein 1 (371 aa).

The tract at residues 1–71 is disordered; that stretch reads MMEKRQPELC…DVPLQNSSNG (71 aa). Basic and acidic residues predominate over residues 34-57; the sequence is GCKEDEESKREEGDKEGGGRFKGD. The region spanning 204 to 256 is the bHLH domain; the sequence is VRRIFTNSRERWRQQNVNGAFAELRKLIPTHPPDKKLSKNEILRLAMKYISFL. Residues 263–371 are disordered; the sequence is QDGGRNVSST…GRPLDGSSRR (109 aa). Basic and acidic residues predominate over residues 293–305; it reads HQDRVVGLARDDI. Over residues 321-335 the composition is skewed to acidic residues; sequence GDADGSPESFMEDQD.

Expressed in the main hemopoietic organs in adults, namely the kidney and the spleen. Also expressed in the liver, brain, gill and gonads.

Its subcellular location is the nucleus. In terms of biological role, transcription factor that plays a pivotal role in hemopoietic and endothelial development. The sequence is that of T-cell acute lymphocytic leukemia protein 1 from Takifugu rubripes (Japanese pufferfish).